The sequence spans 207 residues: Small ribosomal subunit protein uS4 (207 aa).

Residues 31 to 55 (KCKLDSKPGQHGRTSGARTSDYGTQ) are disordered. Polar residues predominate over residues 42 to 53 (GRTSGARTSDYG). The region spanning 97 to 160 (SRLDNVVYRM…KKQARIVEAL (64 aa)) is the S4 RNA-binding domain.

Belongs to the universal ribosomal protein uS4 family. Part of the 30S ribosomal subunit. Contacts protein S5. The interaction surface between S4 and S5 is involved in control of translational fidelity.

In terms of biological role, one of the primary rRNA binding proteins, it binds directly to 16S rRNA where it nucleates assembly of the body of the 30S subunit. Functionally, with S5 and S12 plays an important role in translational accuracy. In Burkholderia lata (strain ATCC 17760 / DSM 23089 / LMG 22485 / NCIMB 9086 / R18194 / 383), this protein is Small ribosomal subunit protein uS4.